A 293-amino-acid polypeptide reads, in one-letter code: DDRGK domain-containing protein 1 (293 aa).

The Lumenal portion of the chain corresponds to Met1–Ile6. A helical transmembrane segment spans residues Tyr7–Ala27. Residues Lys28 to Ala293 lie on the Cytoplasmic side of the membrane. Disordered regions lie at residues Val30 to Glu151 and Thr273 to Ala293. Composition is skewed to basic and acidic residues over residues Lys90–Glu126 and Glu133–Glu151.

It belongs to the DDRGK1 family.

It localises to the endoplasmic reticulum membrane. Substrate adapter for ufmylation, the covalent attachment of the ubiquitin-like modifier UFM1 to substrate proteins. This Monosiga brevicollis (Choanoflagellate) protein is DDRGK domain-containing protein 1.